The primary structure comprises 131 residues: Small ribosomal subunit protein uS8 (131 aa).

Belongs to the universal ribosomal protein uS8 family. In terms of assembly, part of the 30S ribosomal subunit. Contacts proteins S5 and S12.

Functionally, one of the primary rRNA binding proteins, it binds directly to 16S rRNA central domain where it helps coordinate assembly of the platform of the 30S subunit. The chain is Small ribosomal subunit protein uS8 from Chromobacterium violaceum (strain ATCC 12472 / DSM 30191 / JCM 1249 / CCUG 213 / NBRC 12614 / NCIMB 9131 / NCTC 9757 / MK).